The primary structure comprises 169 residues: Allophycocyanin subunit beta-18 (169 aa).

Asparagine 72 is subject to N4-methylasparagine. Cysteine 82 serves as a coordination point for (2R,3E)-phycocyanobilin.

The protein belongs to the phycobiliprotein family. As to quaternary structure, heterodimer of ApcE and this beta chain. Post-translationally, contains one covalently linked bilin chromophore.

The protein localises to the cellular thylakoid membrane. Its function is as follows. A variant beta-allophycocyanin (AP) which forms a complex with ApcE, a phycobilisome terminal emitter that influences energy transfer to photosystem II. The sequence is that of Allophycocyanin subunit beta-18 (apcF) from Synechocystis sp. (strain ATCC 27184 / PCC 6803 / Kazusa).